A 262-amino-acid chain; its full sequence is 3-methyl-2-oxobutanoate hydroxymethyltransferase (262 aa).

Mg(2+) is bound by residues D42 and D81. 3-methyl-2-oxobutanoate contacts are provided by residues 42 to 43 (DS), D81, and K110. E112 is a Mg(2+) binding site. Catalysis depends on E180, which acts as the Proton acceptor.

This sequence belongs to the PanB family. In terms of assembly, homodecamer; pentamer of dimers. Mg(2+) is required as a cofactor.

It is found in the cytoplasm. The enzyme catalyses 3-methyl-2-oxobutanoate + (6R)-5,10-methylene-5,6,7,8-tetrahydrofolate + H2O = 2-dehydropantoate + (6S)-5,6,7,8-tetrahydrofolate. Its pathway is cofactor biosynthesis; (R)-pantothenate biosynthesis; (R)-pantoate from 3-methyl-2-oxobutanoate: step 1/2. Functionally, catalyzes the reversible reaction in which hydroxymethyl group from 5,10-methylenetetrahydrofolate is transferred onto alpha-ketoisovalerate to form ketopantoate. This is 3-methyl-2-oxobutanoate hydroxymethyltransferase from Legionella pneumophila (strain Paris).